Here is a 118-residue protein sequence, read N- to C-terminus: Large ribosomal subunit protein bL20 (118 aa).

This sequence belongs to the bacterial ribosomal protein bL20 family.

In terms of biological role, binds directly to 23S ribosomal RNA and is necessary for the in vitro assembly process of the 50S ribosomal subunit. It is not involved in the protein synthesizing functions of that subunit. The protein is Large ribosomal subunit protein bL20 of Desulfovibrio desulfuricans (strain ATCC 27774 / DSM 6949 / MB).